We begin with the raw amino-acid sequence, 149 residues long: D-aminoacyl-tRNA deacylase (149 aa).

Residues 137 to 138 (GP) carry the Gly-cisPro motif, important for rejection of L-amino acids motif.

It belongs to the DTD family. As to quaternary structure, homodimer.

It is found in the cytoplasm. The catalysed reaction is glycyl-tRNA(Ala) + H2O = tRNA(Ala) + glycine + H(+). It catalyses the reaction a D-aminoacyl-tRNA + H2O = a tRNA + a D-alpha-amino acid + H(+). Functionally, an aminoacyl-tRNA editing enzyme that deacylates mischarged D-aminoacyl-tRNAs. Also deacylates mischarged glycyl-tRNA(Ala), protecting cells against glycine mischarging by AlaRS. Acts via tRNA-based rather than protein-based catalysis; rejects L-amino acids rather than detecting D-amino acids in the active site. By recycling D-aminoacyl-tRNA to D-amino acids and free tRNA molecules, this enzyme counteracts the toxicity associated with the formation of D-aminoacyl-tRNA entities in vivo and helps enforce protein L-homochirality. The polypeptide is D-aminoacyl-tRNA deacylase (Syntrophobacter fumaroxidans (strain DSM 10017 / MPOB)).